A 180-amino-acid chain; its full sequence is NAD(P)H-quinone oxidoreductase subunit I, chloroplastic (180 aa).

4Fe-4S ferredoxin-type domains follow at residues 55 to 84 (GRIH…VDWR) and 95 to 124 (LNYS…MTEE). [4Fe-4S] cluster is bound by residues Cys-64, Cys-67, Cys-70, Cys-74, Cys-104, Cys-107, Cys-110, and Cys-114.

It belongs to the complex I 23 kDa subunit family. NDH is composed of at least 16 different subunits, 5 of which are encoded in the nucleus. The cofactor is [4Fe-4S] cluster.

The protein localises to the plastid. The protein resides in the chloroplast thylakoid membrane. The enzyme catalyses a plastoquinone + NADH + (n+1) H(+)(in) = a plastoquinol + NAD(+) + n H(+)(out). It catalyses the reaction a plastoquinone + NADPH + (n+1) H(+)(in) = a plastoquinol + NADP(+) + n H(+)(out). NDH shuttles electrons from NAD(P)H:plastoquinone, via FMN and iron-sulfur (Fe-S) centers, to quinones in the photosynthetic chain and possibly in a chloroplast respiratory chain. The immediate electron acceptor for the enzyme in this species is believed to be plastoquinone. Couples the redox reaction to proton translocation, and thus conserves the redox energy in a proton gradient. The sequence is that of NAD(P)H-quinone oxidoreductase subunit I, chloroplastic from Hordeum vulgare (Barley).